A 712-amino-acid chain; its full sequence is Secretin OutD (712 aa).

Residues 1 to 27 form the signal peptide; sequence MLGKGIKKSWGWLGLTVLLLGSPCGWA. The N0 stretch occupies residues 28–124; that stretch reads AEFSASFKGT…LANNEQPGVG (97 aa). The segment at 126–190 is N1; sequence ELVTRVVPLN…DIVNTVDKTG (65 aa). The interval 191 to 264 is N2; the sequence is DREMITVSLN…MIRQLDRKQV (74 aa). The N3 stretch occupies residues 267 to 394; sequence GGTKVIYLKY…DLEQVINQLD (128 aa). The interval 288–342 is disordered; it reads GNGTSGNRNSSSTNSSRPSSTRSSSTLNNSNSSSSGSSSGSGSSSSSSSSSMGFG. The interval 399 to 651 is secretin; sequence QVLVEAIIAE…LFLRPTIIRD (253 aa). A s domain region spans residues 653-712; that stretch reads QQYQQASISKYNSFNNEQQQQRGQGNSVLDNNTLRLSGGNTYTFRQVQSSISAFYQPEGR.

This sequence belongs to the bacterial secretin family. GSP D subfamily. In terms of assembly, forms a cylindrical channel with 15 subunits.

It is found in the cell outer membrane. Involved in a type II secretion system (T2SS, formerly general secretion pathway, GSP) for the export of proteins. Required for the translocation of the multiple pectic enzymes. This subunit forms the outer membrane channel. In Dickeya chrysanthemi (Pectobacterium chrysanthemi), this protein is Secretin OutD (outD).